The chain runs to 82 residues: MAVKIRLKRMGAKKAPFYRVVVADSRSPRDGRFVEEIGYYNPITEPSTIKLDEEKVQKWIKNGAQPTDTVKKLIEKAGISVK.

This sequence belongs to the bacterial ribosomal protein bS16 family.

The chain is Small ribosomal subunit protein bS16 from Clostridium botulinum (strain Okra / Type B1).